The chain runs to 419 residues: Effector protein BipC (419 aa).

Disordered regions lie at residues 62 to 91 (VAGSGAQRVELARPKPDAQTRATDRRTVSG) and 338 to 402 (LQSG…AKSQ). Basic and acidic residues-rich tracts occupy residues 71–91 (ELARPKPDAQTRATDRRTVSG) and 380–392 (TRDEAAHRSREAA).

This sequence belongs to the SctB/SipC family.

It is found in the secreted. In Burkholderia mallei (strain NCTC 10247), this protein is Effector protein BipC (bipC).